The sequence spans 145 residues: MLLSRAISVVALLACICCGVHTQDSKADLGTLRTTDSAIITSQRRLRTSVDLVDNEERFRWPFQQFFKDRWHRKQIKTYFRDQKDNVSEGLVEQLIARHGLKNVEKVLSEVKFPLAVQISIRKILVNYKGKQAFTRPHLTPADTL.

The N-terminal stretch at 1–22 (MLLSRAISVVALLACICCGVHT) is a signal peptide. Residues 44 to 58 (RRLRTSVDLVDNEER) carry the RxLR-dEER motif.

It belongs to the RxLR effector family.

Its subcellular location is the secreted. The protein resides in the host cell membrane. Functionally, secreted effector that triggers a robust hypersensitive response (HR) in Lactuca sativa cv. Design that is resistant to multiple B.lactucae races, including Bl:24. The polypeptide is RxLR effector protein BLR40 (Bremia lactucae (Lettuce downy mildew)).